The following is a 260-amino-acid chain: Carbonic anhydrase 3 (260 aa).

At alanine 2 the chain carries N-acetylalanine. The region spanning lysine 3 to phenylalanine 259 is the Alpha-carbonic anhydrase domain. Serine 29, serine 43, serine 48, serine 50, and serine 55 each carry phosphoserine. Residues lysine 64–arginine 67 are involved in proton transfer. At threonine 73 the chain carries Phosphothreonine. Zn(2+) contacts are provided by histidine 94, histidine 96, and histidine 119. Phosphotyrosine is present on tyrosine 127. Threonine 129 and threonine 176 each carry phosphothreonine. S-glutathionyl cysteine occurs at positions 182 and 187. Threonine 198–threonine 199 contacts substrate. Threonine 216 bears the Phosphothreonine mark. Serine 219 carries the post-translational modification Phosphoserine.

Belongs to the alpha-carbonic anhydrase family. Requires Zn(2+) as cofactor. In terms of processing, S-thiolated both by thiol-disulfide exchange with glutathione disulfide and by oxyradical-initiated S-thiolation with reduced glutathione. Post-translationally, S-glutathionylated in hepatocytes under oxidative stress. As to expression, expressed at lower levels in adipose tissue from animals that were either genetically obese or had experimentally induced obesity.

The protein localises to the cytoplasm. The catalysed reaction is hydrogencarbonate + H(+) = CO2 + H2O. Its activity is regulated as follows. Inhibited by acetazolamide. Reversible hydration of carbon dioxide. This is Carbonic anhydrase 3 from Mus musculus (Mouse).